Here is a 274-residue protein sequence, read N- to C-terminus: Large ribosomal subunit protein uL2cz/uL2cy (274 aa).

Polar residues predominate over residues 1–15 (MAINLYKTSTPSTRN). Disordered regions lie at residues 1-22 (MAINLYKTSTPSTRNGAVDSQV) and 225-274 (PVDH…RRSK).

Belongs to the universal ribosomal protein uL2 family. Part of the 50S ribosomal subunit.

The protein resides in the plastid. The protein localises to the chloroplast. The polypeptide is Large ribosomal subunit protein uL2cz/uL2cy (rpl2-A) (Lobularia maritima (Sweet alyssum)).